Consider the following 307-residue polypeptide: UPF0282 protein PH1002 (307 aa).

This sequence belongs to the UPF0282 family.

The polypeptide is UPF0282 protein PH1002 (Pyrococcus horikoshii (strain ATCC 700860 / DSM 12428 / JCM 9974 / NBRC 100139 / OT-3)).